Here is a 273-residue protein sequence, read N- to C-terminus: Bis(5'-nucleosyl)-tetraphosphatase, symmetrical (273 aa).

The protein belongs to the Ap4A hydrolase family.

The enzyme catalyses P(1),P(4)-bis(5'-adenosyl) tetraphosphate + H2O = 2 ADP + 2 H(+). In terms of biological role, hydrolyzes diadenosine 5',5'''-P1,P4-tetraphosphate to yield ADP. This is Bis(5'-nucleosyl)-tetraphosphatase, symmetrical from Proteus mirabilis (strain HI4320).